The sequence spans 173 residues: Photosystem I assembly protein Ycf3 (173 aa).

3 TPR repeats span residues 35 to 68 (AFAY…EEDP), 72 to 105 (SYTF…NPKM), and 120 to 153 (GEQA…APDN).

It belongs to the Ycf3 family.

The protein resides in the plastid. It localises to the cyanelle thylakoid membrane. Its function is as follows. Essential for the assembly of the photosystem I (PSI) complex. May act as a chaperone-like factor to guide the assembly of the PSI subunits. The chain is Photosystem I assembly protein Ycf3 from Cyanophora paradoxa.